The sequence spans 311 residues: Malate dehydrogenase (311 aa).

Residues Gly-10–Gly-15 and Asp-35 contribute to the NAD(+) site. 2 residues coordinate substrate: Arg-84 and Arg-90. NAD(+) contacts are provided by residues Asn-97 and Val-120–Asn-122. Positions 122 and 153 each coordinate substrate. The Proton acceptor role is filled by His-177.

This sequence belongs to the LDH/MDH superfamily. MDH type 3 family.

It carries out the reaction (S)-malate + NAD(+) = oxaloacetate + NADH + H(+). Its function is as follows. Catalyzes the reversible oxidation of malate to oxaloacetate. This Nitrosococcus oceani (strain ATCC 19707 / BCRC 17464 / JCM 30415 / NCIMB 11848 / C-107) protein is Malate dehydrogenase.